Reading from the N-terminus, the 427-residue chain is MSAIVDIIGREVLDSRGNPTVECDVLLESGVMGRAAVPSGASTGSREAIELRDGDKGRYLGKGVLKAVEHINTEISEAIMGLDASEQAFLDRTLIDLDGTENKGRLGANATLAVSMAVAKAAAEEAGLPLYRYFGGSGAMQMPVPMMNIVNGGAHANNSLDIQEFMVMPVGQQSFREALRCGAEIFHALKKIIADKGMSTAVGDEGGFAPNFASNEECLNTILSAIEKAGYRPGEDVLLALDCAASEFYRDGKYHLDGEGLQLSSVDFANYLANLADKFPIVSIEDGMHESDWDGWKVLTEKLGNKVQLVGDDLFVTNTRILKEGIEKGIANSILIKINQIGTLTETFAAIEMAKRAGYTAVISHRSGETEDSTIADIAVGTNAGQIKTGSLSRSDRIAKYNQLLRIEEDLGDIASYPGKSAFYNLR.

Gln-163 is a binding site for (2R)-2-phosphoglycerate. Glu-205 functions as the Proton donor in the catalytic mechanism. Positions 242, 285, and 312 each coordinate Mg(2+). (2R)-2-phosphoglycerate contacts are provided by Lys-337, Arg-366, Ser-367, and Lys-388. Lys-337 serves as the catalytic Proton acceptor.

The protein belongs to the enolase family. The cofactor is Mg(2+).

It localises to the cytoplasm. Its subcellular location is the secreted. It is found in the cell surface. It carries out the reaction (2R)-2-phosphoglycerate = phosphoenolpyruvate + H2O. The protein operates within carbohydrate degradation; glycolysis; pyruvate from D-glyceraldehyde 3-phosphate: step 4/5. In terms of biological role, catalyzes the reversible conversion of 2-phosphoglycerate (2-PG) into phosphoenolpyruvate (PEP). It is essential for the degradation of carbohydrates via glycolysis. This chain is Enolase, found in Ralstonia nicotianae (strain ATCC BAA-1114 / GMI1000) (Ralstonia solanacearum).